A 343-amino-acid chain; its full sequence is MQEIVIPLKEKSYKVFLGELPEIKLKQKALIISDSIVSGLHLSYLLERLKALEVRVCVIESGEKYKNFHSLERILNNAFEMQLNRHSLMIALGGGVISDMVGFASSIYFRGIDFINIPTTLLAQVDASVGGKTGINTPYGKNLIGSFHQPKAVYIDLSFLKTLEKREFQAGVAEIIKMAVCFDKNLVERLETKDLKDCLEEVVFQSVNIKAQVVVQDEKERNIRAGLNYGHTFGHAIEKETDYERFLHGEAIAIGMCMANDLALSLGMLTLKEYERIENLLKKFDLIFHYKIIDLQKFYERLFLDKKSENKTIKFILPKGIGAFEATSHIPKETILKVLEKWH.

Residues 61 to 66 (SGEKYK), 95 to 99 (GVISD), 119 to 120 (TT), Lys-132, Lys-141, and 159 to 162 (FLKT) each bind NAD(+). Zn(2+) contacts are provided by Glu-174, His-231, and His-248.

The protein belongs to the sugar phosphate cyclases superfamily. Dehydroquinate synthase family. Co(2+) serves as cofactor. Zn(2+) is required as a cofactor. Requires NAD(+) as cofactor.

It is found in the cytoplasm. The catalysed reaction is 7-phospho-2-dehydro-3-deoxy-D-arabino-heptonate = 3-dehydroquinate + phosphate. Its pathway is metabolic intermediate biosynthesis; chorismate biosynthesis; chorismate from D-erythrose 4-phosphate and phosphoenolpyruvate: step 2/7. Its function is as follows. Catalyzes the conversion of 3-deoxy-D-arabino-heptulosonate 7-phosphate (DAHP) to dehydroquinate (DHQ). This Helicobacter pylori (strain G27) protein is 3-dehydroquinate synthase.